Consider the following 303-residue polypeptide: Ribosomal RNA small subunit methyltransferase A (303 aa).

S-adenosyl-L-methionine is bound by residues Asn-37, Val-39, Gly-64, Glu-85, Asp-115, and Asn-138.

Belongs to the class I-like SAM-binding methyltransferase superfamily. rRNA adenine N(6)-methyltransferase family. RsmA subfamily.

It is found in the cytoplasm. The catalysed reaction is adenosine(1518)/adenosine(1519) in 16S rRNA + 4 S-adenosyl-L-methionine = N(6)-dimethyladenosine(1518)/N(6)-dimethyladenosine(1519) in 16S rRNA + 4 S-adenosyl-L-homocysteine + 4 H(+). Specifically dimethylates two adjacent adenosines (A1518 and A1519) in the loop of a conserved hairpin near the 3'-end of 16S rRNA in the 30S particle. May play a critical role in biogenesis of 30S subunits. This Bifidobacterium adolescentis (strain ATCC 15703 / DSM 20083 / NCTC 11814 / E194a) protein is Ribosomal RNA small subunit methyltransferase A.